The primary structure comprises 37 residues: Large ribosomal subunit protein bL36 (37 aa).

Belongs to the bacterial ribosomal protein bL36 family.

The chain is Large ribosomal subunit protein bL36 (rpmJ) from Mycobacterium tuberculosis (strain ATCC 25618 / H37Rv).